Consider the following 470-residue polypeptide: Cupincin (470 aa).

The N-terminal stretch at 1-34 (MAKKKTSSSMARSQLAALLISLCFLSLASNAVGW) is a signal peptide. Positions 36–52 (RRGEREEEDERRRHGGE) are enriched in basic and acidic residues. 2 disordered regions span residues 36–57 (RRGE…GRPY) and 240–261 (KSCS…PSSL). Cupin type-1 domains are found at residues 57 to 215 (YHFG…EELE) and 259 to 445 (SSLT…AREA). N-linked (GlcNAc...) asparagine glycosylation occurs at Asn-297. A disordered region spans residues 330-368 (PHVSGGGSSERREREREHGRRREEEQGEEEHGERGEKAR). The span at 338 to 367 (SERREREREHGRRREEEQGEEEHGERGEKA) shows a compositional bias: basic and acidic residues. 3 residues coordinate Zn(2+): His-347, Glu-352, and His-360.

Belongs to the 7S seed storage protein family. In terms of assembly, homotrimer. Zn(2+) is required as a cofactor.

Its subcellular location is the secreted. Its function is as follows. Seed storage protein. Globulin-like protein that acts as a zinc metalloprotease. Cleaves specifically between Leu-15 and Tyr-16 of insulin B chain, and Gln-1 and Leu-2 of neurotensin (NT) peptide in vitro. May play a role as an initiating endopeptidase in germinating seeds. The polypeptide is Cupincin (Oryza sativa subsp. indica (Rice)).